Consider the following 454-residue polypeptide: tRNA(Ile)-lysidine synthase (454 aa).

27–32 lines the ATP pocket; that stretch reads SGGSDS.

This sequence belongs to the tRNA(Ile)-lysidine synthase family.

The protein resides in the cytoplasm. It carries out the reaction cytidine(34) in tRNA(Ile2) + L-lysine + ATP = lysidine(34) in tRNA(Ile2) + AMP + diphosphate + H(+). In terms of biological role, ligates lysine onto the cytidine present at position 34 of the AUA codon-specific tRNA(Ile) that contains the anticodon CAU, in an ATP-dependent manner. Cytidine is converted to lysidine, thus changing the amino acid specificity of the tRNA from methionine to isoleucine. In Mesorhizobium japonicum (strain LMG 29417 / CECT 9101 / MAFF 303099) (Mesorhizobium loti (strain MAFF 303099)), this protein is tRNA(Ile)-lysidine synthase.